A 342-amino-acid chain; its full sequence is Dihydroorotate dehydrogenase (quinone) (342 aa).

FMN-binding positions include alanine 65 to lysine 69 and threonine 89. Substrate is bound at residue lysine 69. Asparagine 114 to phenylalanine 118 lines the substrate pocket. Positions 142 and 175 each coordinate FMN. Asparagine 175 provides a ligand contact to substrate. Serine 178 acts as the Nucleophile in catalysis. Position 180 (asparagine 180) interacts with substrate. FMN is bound by residues lysine 220 and threonine 248. Position 249-250 (asparagine 249–threonine 250) interacts with substrate. FMN contacts are provided by residues glycine 271, glycine 300, and tyrosine 321–threonine 322.

This sequence belongs to the dihydroorotate dehydrogenase family. Type 2 subfamily. As to quaternary structure, monomer. FMN serves as cofactor.

The protein localises to the cell membrane. The catalysed reaction is (S)-dihydroorotate + a quinone = orotate + a quinol. The protein operates within pyrimidine metabolism; UMP biosynthesis via de novo pathway; orotate from (S)-dihydroorotate (quinone route): step 1/1. Catalyzes the conversion of dihydroorotate to orotate with quinone as electron acceptor. The protein is Dihydroorotate dehydrogenase (quinone) of Burkholderia pseudomallei (strain K96243).